The chain runs to 359 residues: MTIYNFSAGPALLPQDVLREAQRELTDWHGSGMSVMEMSHRGREFMSIHARAEADLRELLQIPDNYRVLFLQGGAHSQFSMVPMNLLRGKTTADYVITGHWGKVAIKEARCYGDMRIAATGEASGFNGIPPQSEWQPNPDAAYLHYVSNETIGGVQFPFIPESGVPLVCDMSSDFLSRPVDVSRFGLIFAGAQKNIGPAGLTLVIVREDLLGQTLPGTPTMFDYKIHADADSMYNTPPTYAIYMAGLVFQWLKDNGGVRGIQMRNEEKAGLLYHTIDSSDGFYRCPVDVECRSRMNVPFRLRTEVLEKRFVDEADMAGLLQLKGHRSVGGVRASIYNAMPFEGVKALVAFMAEFARRHG.

Arg-41 is a binding site for L-glutamate. Residues Trp-101, Thr-151, Asp-170, and Gln-193 each contribute to the pyridoxal 5'-phosphate site. N6-(pyridoxal phosphate)lysine is present on Lys-194. Residue 235–236 (NT) participates in pyridoxal 5'-phosphate binding.

It belongs to the class-V pyridoxal-phosphate-dependent aminotransferase family. SerC subfamily. In terms of assembly, homodimer. It depends on pyridoxal 5'-phosphate as a cofactor.

It localises to the cytoplasm. The enzyme catalyses O-phospho-L-serine + 2-oxoglutarate = 3-phosphooxypyruvate + L-glutamate. The catalysed reaction is 4-(phosphooxy)-L-threonine + 2-oxoglutarate = (R)-3-hydroxy-2-oxo-4-phosphooxybutanoate + L-glutamate. Its pathway is amino-acid biosynthesis; L-serine biosynthesis; L-serine from 3-phospho-D-glycerate: step 2/3. It participates in cofactor biosynthesis; pyridoxine 5'-phosphate biosynthesis; pyridoxine 5'-phosphate from D-erythrose 4-phosphate: step 3/5. Its function is as follows. Catalyzes the reversible conversion of 3-phosphohydroxypyruvate to phosphoserine and of 3-hydroxy-2-oxo-4-phosphonooxybutanoate to phosphohydroxythreonine. The protein is Phosphoserine aminotransferase of Laribacter hongkongensis (strain HLHK9).